The primary structure comprises 332 residues: Phosphate acyltransferase (332 aa).

Belongs to the PlsX family. As to quaternary structure, homodimer. Probably interacts with PlsY.

The protein resides in the cytoplasm. It carries out the reaction a fatty acyl-[ACP] + phosphate = an acyl phosphate + holo-[ACP]. It functions in the pathway lipid metabolism; phospholipid metabolism. Catalyzes the reversible formation of acyl-phosphate (acyl-PO(4)) from acyl-[acyl-carrier-protein] (acyl-ACP). This enzyme utilizes acyl-ACP as fatty acyl donor, but not acyl-CoA. The sequence is that of Phosphate acyltransferase from Streptococcus mutans serotype c (strain ATCC 700610 / UA159).